The following is a 351-amino-acid chain: Spermidine/putrescine import ATP-binding protein PotA (351 aa).

One can recognise an ABC transporter domain in the interval leucine 6–isoleucine 236. Glycine 38–threonine 45 serves as a coordination point for ATP.

Belongs to the ABC transporter superfamily. Spermidine/putrescine importer (TC 3.A.1.11.1) family. In terms of assembly, the complex is composed of two ATP-binding proteins (PotA), two transmembrane proteins (PotB and PotC) and a solute-binding protein (PotD).

Its subcellular location is the cell membrane. It catalyses the reaction ATP + H2O + polyamine-[polyamine-binding protein]Side 1 = ADP + phosphate + polyamineSide 2 + [polyamine-binding protein]Side 1.. Its function is as follows. Part of the ABC transporter complex PotABCD involved in spermidine/putrescine import. Responsible for energy coupling to the transport system. The sequence is that of Spermidine/putrescine import ATP-binding protein PotA from Mycoplasma capricolum subsp. capricolum (strain California kid / ATCC 27343 / NCTC 10154).